The primary structure comprises 191 residues: uncharacterized protein (191 aa).

An HTH tetR-type domain is found at 3 to 63 (IDRKKLILEA…EIFTTLLKEM (61 aa)). The H-T-H motif DNA-binding region spans 26-45 (TMDLVAKLANVGKGTIYTFF).

This is an uncharacterized protein from Bacillus subtilis (strain 168).